Here is a 217-residue protein sequence, read N- to C-terminus: Small ribosomal subunit protein uS3 (217 aa).

Residues 40–110 (IRDLINKGFN…EVYINIHEVR (71 aa)) enclose the KH type-2 domain.

It belongs to the universal ribosomal protein uS3 family. In terms of assembly, part of the 30S ribosomal subunit. Forms a tight complex with proteins S10 and S14.

Binds the lower part of the 30S subunit head. Binds mRNA in the 70S ribosome, positioning it for translation. In Rickettsia africae (strain ESF-5), this protein is Small ribosomal subunit protein uS3.